Reading from the N-terminus, the 842-residue chain is Protein translocase subunit SecA (842 aa).

ATP-binding positions include Gln91, 109–113 (GEGKT), and Asp498. Basic and acidic residues predominate over residues 798–824 (QGQHVSAEDGKEKVKPQPVVKDNHIGR). The tract at residues 798–827 (QGQHVSAEDGKEKVKPQPVVKDNHIGRNDP) is disordered. Zn(2+)-binding residues include Cys828, Cys830, Cys839, and Cys840.

Belongs to the SecA family. In terms of assembly, monomer and homodimer. Part of the essential Sec protein translocation apparatus which comprises SecA, SecYEG and auxiliary proteins SecDF. Other proteins may also be involved. Requires Zn(2+) as cofactor.

It localises to the cell membrane. The protein resides in the cytoplasm. It catalyses the reaction ATP + H2O + cellular proteinSide 1 = ADP + phosphate + cellular proteinSide 2.. In terms of biological role, part of the Sec protein translocase complex. Interacts with the SecYEG preprotein conducting channel. Has a central role in coupling the hydrolysis of ATP to the transfer of proteins into and across the cell membrane, serving as an ATP-driven molecular motor driving the stepwise translocation of polypeptide chains across the membrane. This Staphylococcus carnosus (strain TM300) protein is Protein translocase subunit SecA.